A 706-amino-acid polypeptide reads, in one-letter code: 1,4-alpha-glucan-branching enzyme (706 aa).

Trp-96 and Lys-133 together coordinate (1,4-alpha-D-glucosyl)n. Asp-358 (nucleophile) is an active-site residue. The Proton donor role is filled by Glu-419.

This sequence belongs to the glycosyl hydrolase 13 family. GlgB subfamily. Monomer.

Its subcellular location is the cytoplasm. It carries out the reaction Transfers a segment of a (1-&gt;4)-alpha-D-glucan chain to a primary hydroxy group in a similar glucan chain.. It participates in glycan biosynthesis; glycogen biosynthesis. Functionally, glycogen-branching enzyme participates in the glycogen biosynthetic process along with glycogenin and glycogen synthase. Generates alpha-1,6-glucosidic branches from alpha-1,4-linked glucose chains, to increase solubility of the glycogen polymer. In Candida glabrata (strain ATCC 2001 / BCRC 20586 / JCM 3761 / NBRC 0622 / NRRL Y-65 / CBS 138) (Yeast), this protein is 1,4-alpha-glucan-branching enzyme (GLC3).